A 102-amino-acid chain; its full sequence is Auxin-responsive protein SAUR68 (102 aa).

The protein belongs to the ARG7 family.

The protein resides in the cell membrane. Its function is as follows. May promote auxin-stimulated organ elongation, such as hypocotyls, stamen filaments and petals. The chain is Auxin-responsive protein SAUR68 from Arabidopsis thaliana (Mouse-ear cress).